Consider the following 54-residue polypeptide: Small ribosomal subunit protein uS14 (54 aa).

4 residues coordinate Zn(2+): Cys19, Cys22, Cys37, and Cys40.

The protein belongs to the universal ribosomal protein uS14 family. Zinc-binding uS14 subfamily. In terms of assembly, part of the 30S ribosomal subunit. Zn(2+) serves as cofactor.

Functionally, binds 16S rRNA, required for the assembly of 30S particles. The polypeptide is Small ribosomal subunit protein uS14 (Saccharolobus solfataricus (strain ATCC 35092 / DSM 1617 / JCM 11322 / P2) (Sulfolobus solfataricus)).